We begin with the raw amino-acid sequence, 339 residues long: Glycerol-3-phosphate dehydrogenase [NAD(P)+] (339 aa).

Residues Ser-15, Tyr-16, His-36, and Lys-110 each coordinate NADPH. Residues Lys-110, Gly-139, and Thr-141 each coordinate sn-glycerol 3-phosphate. Ala-143 is a binding site for NADPH. Residues Lys-195, Asp-248, Ser-258, Arg-259, and Asn-260 each coordinate sn-glycerol 3-phosphate. Lys-195 acts as the Proton acceptor in catalysis. Arg-259 provides a ligand contact to NADPH. Residues Val-283 and Glu-285 each coordinate NADPH.

The protein belongs to the NAD-dependent glycerol-3-phosphate dehydrogenase family.

It is found in the cytoplasm. The enzyme catalyses sn-glycerol 3-phosphate + NAD(+) = dihydroxyacetone phosphate + NADH + H(+). It carries out the reaction sn-glycerol 3-phosphate + NADP(+) = dihydroxyacetone phosphate + NADPH + H(+). Its pathway is membrane lipid metabolism; glycerophospholipid metabolism. Catalyzes the reduction of the glycolytic intermediate dihydroxyacetone phosphate (DHAP) to sn-glycerol 3-phosphate (G3P), the key precursor for phospholipid synthesis. This chain is Glycerol-3-phosphate dehydrogenase [NAD(P)+], found in Erwinia tasmaniensis (strain DSM 17950 / CFBP 7177 / CIP 109463 / NCPPB 4357 / Et1/99).